The sequence spans 277 residues: Cell division protein ZipA (277 aa).

Residues 1–5 (MQDLR) are Periplasmic-facing. Residues 6-26 (LMLLLFGVITIIVLFLHGVWA) form a helical membrane-spanning segment. Over 27–277 (RRKERSALFY…NALIRSTPHL (251 aa)) the chain is Cytoplasmic. Residues 120 to 139 (QKKSDDLSHQSKETHHPSIQ) form a disordered region.

This sequence belongs to the ZipA family. In terms of assembly, interacts with FtsZ via their C-terminal domains.

It localises to the cell inner membrane. Functionally, essential cell division protein that stabilizes the FtsZ protofilaments by cross-linking them and that serves as a cytoplasmic membrane anchor for the Z ring. Also required for the recruitment to the septal ring of downstream cell division proteins. This is Cell division protein ZipA from Hamiltonella defensa subsp. Acyrthosiphon pisum (strain 5AT).